The sequence spans 476 residues: DnaJ protein P58IPK homolog A (476 aa).

Positions 1–28 (MVAMARWPWRVLLPLLLLHSSPVFFVFA) are cleaved as a signal peptide. 8 TPR repeats span residues 36–69 (PSTLFKRALEMMNLRKYDGSLGLLNAVLEVEPNH), 70–103 (SEAYRQRASVLRHKCRYKEAEGDYSKYLELKPGS), 116–150 (AQNALESAYGQFESHDFSKVLDYINKIVLVFSPDC), 152–184 (KAKLLKAKALLALKDYSTVISETGFILKEDEDN), 185–218 (LDALLLRGRAYYYLADHDVASRHYQKGLRLDPEH), 231–264 (LVKKTKSAEDNAAKGKLRVSAEDYKASLAMDPDH), 269–302 (VHLYLGLCKVLVKLGRGKEAISSCTEALNIDGEL), and 304–336 (DALTQRGEAKLLTEDWEGAVQDLKEAAQKSPQD). A J domain is found at 357–423 (DWYKILGISK…DKRVRYDRGE (67 aa)).

Interacts with BIP1.

The protein resides in the endoplasmic reticulum lumen. Its function is as follows. May play a role in protein folding in the endoplasmic reticulum. The polypeptide is DnaJ protein P58IPK homolog A (Oryza sativa subsp. japonica (Rice)).